Consider the following 376-residue polypeptide: Putative glutamate--cysteine ligase 2 (376 aa).

It belongs to the glutamate--cysteine ligase type 2 family. YbdK subfamily.

The catalysed reaction is L-cysteine + L-glutamate + ATP = gamma-L-glutamyl-L-cysteine + ADP + phosphate + H(+). ATP-dependent carboxylate-amine ligase which exhibits weak glutamate--cysteine ligase activity. This Paracoccus denitrificans (strain Pd 1222) protein is Putative glutamate--cysteine ligase 2.